A 166-amino-acid polypeptide reads, in one-letter code: Large ribosomal subunit protein uL10 (166 aa).

Belongs to the universal ribosomal protein uL10 family. In terms of assembly, part of the ribosomal stalk of the 50S ribosomal subunit. The N-terminus interacts with L11 and the large rRNA to form the base of the stalk. The C-terminus forms an elongated spine to which L12 dimers bind in a sequential fashion forming a multimeric L10(L12)X complex.

Its function is as follows. Forms part of the ribosomal stalk, playing a central role in the interaction of the ribosome with GTP-bound translation factors. The polypeptide is Large ribosomal subunit protein uL10 (Bacillus cereus (strain 03BB102)).